The following is a 153-amino-acid chain: Small ribosomal subunit protein bS6 (153 aa).

The tract at residues 94–153 (EAHEEGPSAMMQKRDRDDRPRRDGDRPDRGPREDRGPRPPREGGFGDREDRPRRPREDRA) is disordered.

The protein belongs to the bacterial ribosomal protein bS6 family.

Binds together with bS18 to 16S ribosomal RNA. The sequence is that of Small ribosomal subunit protein bS6 from Agrobacterium fabrum (strain C58 / ATCC 33970) (Agrobacterium tumefaciens (strain C58)).